Here is a 303-residue protein sequence, read N- to C-terminus: MDQNLKEQILELKRQKNAIILAHYYQRPEVQEIADFIGDSYNLSKIAKENDADTIVFCGVKFMAESAKVLSPQKKVLLPQPKAGCPMADMADAEGLAALKAKHPNAKVVSYINSSVEVKALCDTCCTSSNAAKIVKRIDSDEIIFLPDKNLGSYVQEMVPEKNIILWDGFCKVHNMIIPTDIEEMKNKYGDMKILAHPECWKPVRDMADFIGSTGAMIDYAEKDTTSDKYLVVTETGIMYKMQERVPNKTFYPLRSMVCVNMKATHLEDVYNSLVNSTFEINIEENLRQKALTSLENMLILGR.

Iminosuccinate-binding residues include His23 and Ser40. Residue Cys85 participates in [4Fe-4S] cluster binding. Residues 111-113 (YIN) and Ser128 contribute to the iminosuccinate site. Cys171 serves as a coordination point for [4Fe-4S] cluster. Residues 197–199 (HPE) and Thr214 each bind iminosuccinate. Cys259 serves as a coordination point for [4Fe-4S] cluster.

It belongs to the quinolinate synthase family. Type 2 subfamily. It depends on [4Fe-4S] cluster as a cofactor.

It localises to the cytoplasm. It catalyses the reaction iminosuccinate + dihydroxyacetone phosphate = quinolinate + phosphate + 2 H2O + H(+). The protein operates within cofactor biosynthesis; NAD(+) biosynthesis; quinolinate from iminoaspartate: step 1/1. Functionally, catalyzes the condensation of iminoaspartate with dihydroxyacetone phosphate to form quinolinate. This is Quinolinate synthase from Clostridium acetobutylicum (strain ATCC 824 / DSM 792 / JCM 1419 / IAM 19013 / LMG 5710 / NBRC 13948 / NRRL B-527 / VKM B-1787 / 2291 / W).